Reading from the N-terminus, the 251-residue chain is NADPH-dependent oxidoreductase (251 aa).

This sequence belongs to the flavin oxidoreductase frp family. FMN is required as a cofactor.

Reduces FMN, organic nitro compounds and disulfide DTNB. Involved in maintenance of the cellular redox state and the disulfide stress response. This chain is NADPH-dependent oxidoreductase (nfrA), found in Staphylococcus aureus (strain bovine RF122 / ET3-1).